The following is an 86-amino-acid chain: UPF0457 protein SSP0714 (86 aa).

Belongs to the UPF0457 family.

In Staphylococcus saprophyticus subsp. saprophyticus (strain ATCC 15305 / DSM 20229 / NCIMB 8711 / NCTC 7292 / S-41), this protein is UPF0457 protein SSP0714.